We begin with the raw amino-acid sequence, 212 residues long: Membrane-bound lytic murein transglycosylase E (212 aa).

It belongs to the transglycosylase Slt family.

The catalysed reaction is Exolytic cleavage of the (1-&gt;4)-beta-glycosidic linkage between N-acetylmuramic acid (MurNAc) and N-acetylglucosamine (GlcNAc) residues in peptidoglycan, from either the reducing or the non-reducing ends of the peptidoglycan chains, with concomitant formation of a 1,6-anhydrobond in the MurNAc residue.. In terms of biological role, murein-degrading enzyme. May play a role in recycling of muropeptides during cell elongation and/or cell division. The sequence is that of Membrane-bound lytic murein transglycosylase E (mltE) from Buchnera aphidicola subsp. Baizongia pistaciae (strain Bp).